The chain runs to 80 residues: Clavanin-A (80 aa).

Residues M1–S19 form the signal peptide. A propeptide spanning residues L20–K29 is cleaved from the precursor. F52 carries the post-translational modification Phenylalanine amide. The propeptide occupies D54–Q80.

The protein localises to the secreted. Has antimicrobial activity. This Styela clava (Sea squirt) protein is Clavanin-A.